The following is a 539-amino-acid chain: Probable protein kinase UbiB (539 aa).

The Protein kinase domain maps to 125–493; it reads RFDVEPLASA…RRRQGDRWAL (369 aa). Residues 131–139 and lysine 153 each bind ATP; that span reads LASASVAQV. Residue aspartate 288 is the Proton acceptor of the active site. The next 2 membrane-spanning stretches (helical) occupy residues 495–515 and 517–537; these read LLGA…AEAA and LAAP…YLIV.

The protein belongs to the ABC1 family. UbiB subfamily.

It localises to the cell inner membrane. It functions in the pathway cofactor biosynthesis; ubiquinone biosynthesis [regulation]. Its function is as follows. Is probably a protein kinase regulator of UbiI activity which is involved in aerobic coenzyme Q (ubiquinone) biosynthesis. The protein is Probable protein kinase UbiB of Pseudomonas putida (strain W619).